The following is a 412-amino-acid chain: Aurora kinase (412 aa).

The segment at 94–119 (NEKVRPSKSSHIPVKSPIRKKGHSPA) is disordered. The Protein kinase domain maps to 148–401 (FEIGKVLGKG…LAEVMNHPWI (254 aa)). Residues 154-162 (LGKGKLGKV) and lysine 177 contribute to the ATP site. The Proton acceptor role is filled by aspartate 271.

The protein belongs to the protein kinase superfamily. Ser/Thr protein kinase family. Aurora subfamily.

The protein resides in the nucleus. It is found in the cytoplasm. It localises to the cytoskeleton. The protein localises to the spindle. Its subcellular location is the chromosome. The protein resides in the centromere. It is found in the kinetochore. The enzyme catalyses L-seryl-[protein] + ATP = O-phospho-L-seryl-[protein] + ADP + H(+). It catalyses the reaction L-threonyl-[protein] + ATP = O-phospho-L-threonyl-[protein] + ADP + H(+). Functionally, component of the chromosomal passenger complex (CPC), a complex that acts as a key regulator of chromosome segregation and cytokinesis. Has a role in error-correction of aberrent kinetochore-microtubule attachments to ensure that sister kinetochores become bioriented and connect to opposite poles by promoting spindle assembly checkpoint signaling. The chain is Aurora kinase (IPL1) from Debaryomyces hansenii (strain ATCC 36239 / CBS 767 / BCRC 21394 / JCM 1990 / NBRC 0083 / IGC 2968) (Yeast).